The sequence spans 348 residues: Protein pelota homolog (348 aa).

This sequence belongs to the eukaryotic release factor 1 family. Pelota subfamily. As to quaternary structure, monomer. A divalent metal cation serves as cofactor.

Its subcellular location is the cytoplasm. In terms of biological role, may function in recognizing stalled ribosomes, interact with stem-loop structures in stalled mRNA molecules, and effect endonucleolytic cleavage of the mRNA. May play a role in the release non-functional ribosomes and degradation of damaged mRNAs. Has endoribonuclease activity. This is Protein pelota homolog from Methanococcus maripaludis (strain C6 / ATCC BAA-1332).